A 347-amino-acid chain; its full sequence is Uroporphyrinogen decarboxylase (347 aa).

Substrate is bound by residues 36–40 (RQAGR), Asp86, Tyr160, Ser212, and His326.

It belongs to the uroporphyrinogen decarboxylase family. Homodimer.

The protein resides in the cytoplasm. It catalyses the reaction uroporphyrinogen III + 4 H(+) = coproporphyrinogen III + 4 CO2. It participates in porphyrin-containing compound metabolism; protoporphyrin-IX biosynthesis; coproporphyrinogen-III from 5-aminolevulinate: step 4/4. Functionally, catalyzes the decarboxylation of four acetate groups of uroporphyrinogen-III to yield coproporphyrinogen-III. This Wolbachia sp. subsp. Brugia malayi (strain TRS) protein is Uroporphyrinogen decarboxylase.